A 742-amino-acid polypeptide reads, in one-letter code: Collectin-12 (742 aa).

The Cytoplasmic portion of the chain corresponds to 1-37 (MKDDFAEEEEVQSFGYKRFGIQEGTQCTKCKNNWALK). Residues 38–58 (FSIVLLYILCALLTITVAILG) form a helical; Signal-anchor for type II membrane protein membrane-spanning segment. Over 59–742 (YKVVEKMDNV…EREAVPSSIL (684 aa)) the chain is Extracellular. An N-linked (GlcNAc...) asparagine glycan is attached at Asn67. A coiled-coil region spans residues 73–142 (ETSHQTYDNK…KDTLEKLQAN (70 aa)). 2 N-linked (GlcNAc...) asparagine glycosylation sites follow: Asn159 and Asn168. The stretch at 205–254 (NLNNLNLTQVQQRNLISNLQQSVDDTSLAIQRIKNDFQNLQQVFLQAKKD) forms a coiled coil. N-linked (GlcNAc...) asparagine glycosylation occurs at Asn271. The disordered stretch occupies residues 439–608 (TILQGPPGPR…TPASEVNGCP (170 aa)). 2 consecutive Collagen-like domains span residues 452 to 511 (GDRG…KGSR) and 527 to 586 (GPPG…PGPS). The span at 501 to 514 (SKGSQGPKGSRGSP) shows a compositional bias: low complexity. The segment covering 516-532 (KPGPQGPSGDPGPPGPP) has biased composition (pro residues). The span at 534-556 (KDGLPGPQGPPGFQGLQGTVGEP) shows a compositional bias: low complexity. A compositionally biased stretch (pro residues) spans 571-585 (PGMPGPKGPPGPPGP). Intrachain disulfides connect Cys607–Cys618, Cys635–Cys730, and Cys708–Cys722. One can recognise a C-type lectin domain in the interval 614–731 (FTDKCYYFSL…CDEINNFICE (118 aa)). 5 residues coordinate Ca(2+): Phe644, Asn646, Glu650, Asp670, and Glu674. Positions 691, 694, and 696 each coordinate a carbohydrate. Positions 694, 696, 697, 706, 707, 718, 719, and 731 each coordinate Ca(2+). A carbohydrate is bound at residue Glu706. Asn718 and Asp719 together coordinate a carbohydrate.

In terms of assembly, the extracellular domain forms a stable trimer. The extracellular domain interacts with fibrillar amyloid-beta peptide. In terms of tissue distribution, expressed in vascular endothelial cells in the heart, in perivascular macrophage and smooth muscle cells. Expressed in plaques-surrounding reactive astrocytes located in cerebral cortex and hippocampus and in leptomeningeal vessels showing characteristics of cerebral amyloid angiopathy (CAA) in a double transgenic mouse model of Alzheimer disease (at protein level). Strongly expressed in lung. Moderately expressed in heart, skeletal muscle, spleen, liver, brain, colon, testis, stomach and kidney. Expressed in neonatal astrocytes. Expressed in reactive astrocytes and vascular/perivascular cells in the brain of a double transgenic mouse model of Alzheimer disease.

It is found in the membrane. Its function is as follows. Scavenger receptor that displays several functions associated with host defense. Promotes binding and phagocytosis of Gram-positive, Gram-negative bacteria and yeast. Also binds to sialyl Lewis X or a trisaccharide and asialo-orosomucoid (ASOR). Mediates the recognition, internalization and degradation of oxidatively modified low density lipoprotein (oxLDL) by vascular endothelial cells. Binds to several carbohydrates including Gal-type ligands, D-galactose, L- and D-fucose, GalNAc, T and Tn antigens in a calcium-dependent manner and internalizes specifically GalNAc in nurse-like cells. In Mus musculus (Mouse), this protein is Collectin-12 (Colec12).